The primary structure comprises 661 residues: UvrABC system protein B (661 aa).

The 158-residue stretch at 25–182 (AGLSSKKRSQ…NDLINLQYER (158 aa)) folds into the Helicase ATP-binding domain. 38-45 (GITGSGKT) contributes to the ATP binding site. The Beta-hairpin signature appears at 91–114 (YYDYYQPEAYIARTDTFIEKDSSI). The Helicase C-terminal domain maps to 430 to 592 (QVEDLISEIQ…IIPKTINRAI (163 aa)). In terms of domain architecture, UVR spans 621–656 (KTHIDKLKKEMLKAASNLEFEQAVKLRDQLKTLEEA).

It belongs to the UvrB family. As to quaternary structure, forms a heterotetramer with UvrA during the search for lesions. Interacts with UvrC in an incision complex.

The protein resides in the cytoplasm. The UvrABC repair system catalyzes the recognition and processing of DNA lesions. A damage recognition complex composed of 2 UvrA and 2 UvrB subunits scans DNA for abnormalities. Upon binding of the UvrA(2)B(2) complex to a putative damaged site, the DNA wraps around one UvrB monomer. DNA wrap is dependent on ATP binding by UvrB and probably causes local melting of the DNA helix, facilitating insertion of UvrB beta-hairpin between the DNA strands. Then UvrB probes one DNA strand for the presence of a lesion. If a lesion is found the UvrA subunits dissociate and the UvrB-DNA preincision complex is formed. This complex is subsequently bound by UvrC and the second UvrB is released. If no lesion is found, the DNA wraps around the other UvrB subunit that will check the other stand for damage. The protein is UvrABC system protein B of Rickettsia rickettsii (strain Sheila Smith).